The chain runs to 140 residues: 6,7-dimethyl-8-ribityllumazine synthase (140 aa).

Residues F11, 42–44 (ALE), and 66–68 (VVI) contribute to the 5-amino-6-(D-ribitylamino)uracil site. 71–72 (ET) contacts (2S)-2-hydroxy-3-oxobutyl phosphate. Catalysis depends on H74, which acts as the Proton donor. Position 98 (N98) interacts with 5-amino-6-(D-ribitylamino)uracil. R112 serves as a coordination point for (2S)-2-hydroxy-3-oxobutyl phosphate.

The protein belongs to the DMRL synthase family.

The catalysed reaction is (2S)-2-hydroxy-3-oxobutyl phosphate + 5-amino-6-(D-ribitylamino)uracil = 6,7-dimethyl-8-(1-D-ribityl)lumazine + phosphate + 2 H2O + H(+). Its pathway is cofactor biosynthesis; riboflavin biosynthesis; riboflavin from 2-hydroxy-3-oxobutyl phosphate and 5-amino-6-(D-ribitylamino)uracil: step 1/2. Its function is as follows. Catalyzes the formation of 6,7-dimethyl-8-ribityllumazine by condensation of 5-amino-6-(D-ribitylamino)uracil with 3,4-dihydroxy-2-butanone 4-phosphate. This is the penultimate step in the biosynthesis of riboflavin. The protein is 6,7-dimethyl-8-ribityllumazine synthase of Erythrobacter litoralis (strain HTCC2594).